Consider the following 380-residue polypeptide: Cytochrome b (380 aa).

4 helical membrane-spanning segments follow: residues 33–53 (SGSLLGLCLITQILTGLFLAM), 77–98 (WLIRNIHANGASFFFICLYLHV), 113–133 (WNIGVVLLLLTMMTAFVGYVL), and 178–198 (FFAFHFLLPFVIAGASMIHLL). The heme b site is built by H83 and H97. The heme b site is built by H182 and H196. H201 contributes to the a ubiquinone binding site. 4 helical membrane passes run 226 to 246 (YKDLLGFILMLIGLTAIALFS), 288 to 308 (LGGVLALLFSILVLMLVPILH), 320 to 340 (LSQILFWTLVADMLVLTWIGG), and 347 to 367 (FVLIGQVASTIYFALFLIALP).

Belongs to the cytochrome b family. In terms of assembly, the cytochrome bc1 complex contains 3 respiratory subunits (MT-CYB, CYC1 and UQCRFS1), 2 core proteins (UQCRC1 and UQCRC2) and probably 6 low-molecular weight proteins. Heme b is required as a cofactor.

The protein resides in the mitochondrion inner membrane. In terms of biological role, component of the ubiquinol-cytochrome c reductase complex (complex III or cytochrome b-c1 complex) that is part of the mitochondrial respiratory chain. The b-c1 complex mediates electron transfer from ubiquinol to cytochrome c. Contributes to the generation of a proton gradient across the mitochondrial membrane that is then used for ATP synthesis. In Polyodon spathula (North American paddlefish), this protein is Cytochrome b (mt-cyb).